A 554-amino-acid polypeptide reads, in one-letter code: Hydroxylamine reductase (554 aa).

Residues Cys3, Cys6, Cys18, and Cys25 each coordinate [2Fe-2S] cluster. Residues His252, Glu276, Cys320, Cys408, Cys436, Cys461, Glu495, and Lys497 each coordinate hybrid [4Fe-2O-2S] cluster. Cysteine persulfide is present on Cys408.

Belongs to the HCP family. Requires [2Fe-2S] cluster as cofactor. It depends on hybrid [4Fe-2O-2S] cluster as a cofactor.

Its subcellular location is the cytoplasm. It carries out the reaction A + NH4(+) + H2O = hydroxylamine + AH2 + H(+). In terms of biological role, catalyzes the reduction of hydroxylamine to form NH(3) and H(2)O. In Shewanella sp. (strain MR-7), this protein is Hydroxylamine reductase.